A 452-amino-acid polypeptide reads, in one-letter code: Chromosomal replication initiator protein DnaA (452 aa).

The tract at residues 1 to 72 is domain I, interacts with DnaA modulators; sequence MPDMLTLWTD…LVEYAYQAAH (72 aa). The tract at residues 72–114 is domain II; sequence HEDIQPVLILENERQQQATLKAKTAPVAAGEPVEPTPTFMKET. The segment at 115–331 is domain III, AAA+ region; it reads ALNSRYTFDT…GALARVQAYS (217 aa). The ATP site is built by Gly159, Gly161, Lys162, and Thr163. Residues 332-452 are domain IV, binds dsDNA; the sequence is QLMHQPIATD…IDSLKDDLRR (121 aa).

This sequence belongs to the DnaA family. Oligomerizes as a right-handed, spiral filament on DNA at oriC.

It localises to the cytoplasm. Plays an essential role in the initiation and regulation of chromosomal replication. ATP-DnaA binds to the origin of replication (oriC) to initiate formation of the DNA replication initiation complex once per cell cycle. Binds the DnaA box (a 9 base pair repeat at the origin) and separates the double-stranded (ds)DNA. Forms a right-handed helical filament on oriC DNA; dsDNA binds to the exterior of the filament while single-stranded (ss)DNA is stabiized in the filament's interior. The ATP-DnaA-oriC complex binds and stabilizes one strand of the AT-rich DNA unwinding element (DUE), permitting loading of DNA polymerase. After initiation quickly degrades to an ADP-DnaA complex that is not apt for DNA replication. Binds acidic phospholipids. In Levilactobacillus brevis (strain ATCC 367 / BCRC 12310 / CIP 105137 / JCM 1170 / LMG 11437 / NCIMB 947 / NCTC 947) (Lactobacillus brevis), this protein is Chromosomal replication initiator protein DnaA.